Consider the following 523-residue polypeptide: 2-isopropylmalate synthase (523 aa).

Residues 5 to 267 (VIIFDTTLRD…HTAINHQEIW (263 aa)) form the Pyruvate carboxyltransferase domain. 4 residues coordinate Mn(2+): Asp14, His202, His204, and Asn238. Positions 392-523 (RLDYFSVQSG…QHNENNKETV (132 aa)) are regulatory domain.

It belongs to the alpha-IPM synthase/homocitrate synthase family. LeuA type 1 subfamily. In terms of assembly, homodimer. Mn(2+) is required as a cofactor.

The protein resides in the cytoplasm. It catalyses the reaction 3-methyl-2-oxobutanoate + acetyl-CoA + H2O = (2S)-2-isopropylmalate + CoA + H(+). The protein operates within amino-acid biosynthesis; L-leucine biosynthesis; L-leucine from 3-methyl-2-oxobutanoate: step 1/4. Functionally, catalyzes the condensation of the acetyl group of acetyl-CoA with 3-methyl-2-oxobutanoate (2-ketoisovalerate) to form 3-carboxy-3-hydroxy-4-methylpentanoate (2-isopropylmalate). In Shigella flexneri serotype 5b (strain 8401), this protein is 2-isopropylmalate synthase.